Here is a 161-residue protein sequence, read N- to C-terminus: Large ribosomal subunit protein uL15 (161 aa).

The disordered stretch occupies residues 1–43; the sequence is MKLSDIADNAGSRKKRMRIGRGIGSGKGKTGGRGGKGQTARSG. The segment covering 21 to 37 has biased composition (gly residues); sequence RGIGSGKGKTGGRGGKG.

Belongs to the universal ribosomal protein uL15 family. Part of the 50S ribosomal subunit.

Functionally, binds to the 23S rRNA. In Nitrobacter hamburgensis (strain DSM 10229 / NCIMB 13809 / X14), this protein is Large ribosomal subunit protein uL15.